We begin with the raw amino-acid sequence, 193 residues long: Potassium-transporting ATPase KdpC subunit (193 aa).

Residues 7-27 (PLVVLFVVLTAVTGLAYPAVM) traverse the membrane as a helical segment.

The protein belongs to the KdpC family. In terms of assembly, the system is composed of three essential subunits: KdpA, KdpB and KdpC.

It is found in the cell inner membrane. Part of the high-affinity ATP-driven potassium transport (or Kdp) system, which catalyzes the hydrolysis of ATP coupled with the electrogenic transport of potassium into the cytoplasm. This subunit acts as a catalytic chaperone that increases the ATP-binding affinity of the ATP-hydrolyzing subunit KdpB by the formation of a transient KdpB/KdpC/ATP ternary complex. The polypeptide is Potassium-transporting ATPase KdpC subunit (Burkholderia orbicola (strain MC0-3)).